We begin with the raw amino-acid sequence, 92 residues long: RQC P-site tRNA stabilizing factor (92 aa).

One can recognise an S4 RNA-binding domain in the interval 5–65 (MRLDKYLKVS…GPKIVTAKIE (61 aa)).

The protein belongs to the RqcP family. Associates with stalled 50S ribosomal subunits. Binds to RqcH, 23S rRNA and the P-site tRNA. Does not require RqcH for association with 50S subunits.

Its function is as follows. Key component of the ribosome quality control system (RQC), a ribosome-associated complex that mediates the extraction of incompletely synthesized nascent chains from stalled ribosomes and their subsequent degradation. RqcH recruits Ala-charged tRNA, and with RqcP directs the elongation of stalled nascent chains on 50S ribosomal subunits, leading to non-templated C-terminal alanine extensions (Ala tail). The Ala tail promotes nascent chain degradation. RqcP is associated with the translocation-like movement of the peptidyl-tRNA from the A-site into the P-site. The polypeptide is RQC P-site tRNA stabilizing factor (Listeria monocytogenes serovar 1/2a (strain ATCC BAA-679 / EGD-e)).